The sequence spans 150 residues: D-aminoacyl-tRNA deacylase (150 aa).

Positions 136-137 match the Gly-cisPro motif, important for rejection of L-amino acids motif; sequence GP.

The protein belongs to the DTD family. In terms of assembly, homodimer.

It is found in the cytoplasm. It catalyses the reaction glycyl-tRNA(Ala) + H2O = tRNA(Ala) + glycine + H(+). It carries out the reaction a D-aminoacyl-tRNA + H2O = a tRNA + a D-alpha-amino acid + H(+). Functionally, an aminoacyl-tRNA editing enzyme that deacylates mischarged D-aminoacyl-tRNAs. Also deacylates mischarged glycyl-tRNA(Ala), protecting cells against glycine mischarging by AlaRS. Acts via tRNA-based rather than protein-based catalysis; rejects L-amino acids rather than detecting D-amino acids in the active site. By recycling D-aminoacyl-tRNA to D-amino acids and free tRNA molecules, this enzyme counteracts the toxicity associated with the formation of D-aminoacyl-tRNA entities in vivo and helps enforce protein L-homochirality. The polypeptide is D-aminoacyl-tRNA deacylase (Staphylococcus aureus (strain MRSA252)).